The sequence spans 433 residues: Protein disulfide-isomerase A6 homolog (433 aa).

The first 19 residues, 1–19 (MRQLASILLLAFVVGSVSA), serve as a signal peptide directing secretion. 2 Thioredoxin domains span residues 20-119 (FYSP…GQRT) and 120-267 (AKAI…KHVA). Catalysis depends on nucleophile residues Cys55, Cys58, Cys186, and Cys189. 2 disulfides stabilise this stretch: Cys55–Cys58 and Cys186–Cys189. N-linked (GlcNAc...) asparagine glycosylation is present at Asn279. The interval 405–433 (VDPWDGKDGQLPTEEDIDLSDIDLDKDEL) is disordered. Acidic residues predominate over residues 417–433 (TEEDIDLSDIDLDKDEL). The short motif at 430–433 (KDEL) is the Prevents secretion from ER element.

This sequence belongs to the protein disulfide isomerase family. As to quaternary structure, interacts with Drpr (via extracellular region). As to expression, in the blastoderm embryo, expression starts at the anterior and posterior poles and later appears as broad stripes. Following gastrulation, expressed in midline precursor cells and the posterior head with low levels present throughout the embryo. During germ band extension, weak dorsoventral stripes of expression are evident. Midline expression begins and is retained throughout embryogenesis in clusters of cells in each segment in the central nervous system. At least some of the midline expression occurs in VUM neurons.

It localises to the endoplasmic reticulum lumen. The protein localises to the cell surface. It carries out the reaction Catalyzes the rearrangement of -S-S- bonds in proteins.. Binds to both apoptotic cells and phagocytes and promotes Drpr-dependent phagocytosis of apoptotic cells. This chain is Protein disulfide-isomerase A6 homolog, found in Drosophila melanogaster (Fruit fly).